Consider the following 729-residue polypeptide: Ribosomal RNA large subunit methyltransferase K/L (729 aa).

Residues 47-158 (TFYRLCLWSR…KNELTLALDL (112 aa)) enclose the THUMP domain.

The protein belongs to the methyltransferase superfamily. RlmKL family.

Its subcellular location is the cytoplasm. It carries out the reaction guanosine(2445) in 23S rRNA + S-adenosyl-L-methionine = N(2)-methylguanosine(2445) in 23S rRNA + S-adenosyl-L-homocysteine + H(+). It catalyses the reaction guanosine(2069) in 23S rRNA + S-adenosyl-L-methionine = N(2)-methylguanosine(2069) in 23S rRNA + S-adenosyl-L-homocysteine + H(+). In terms of biological role, specifically methylates the guanine in position 2445 (m2G2445) and the guanine in position 2069 (m7G2069) of 23S rRNA. The protein is Ribosomal RNA large subunit methyltransferase K/L of Dichelobacter nodosus (strain VCS1703A).